Here is a 207-residue protein sequence, read N- to C-terminus: Guanylate kinase (207 aa).

Positions 4-184 (GTLYIVSAPS…ALTDLKTIIR (181 aa)) constitute a Guanylate kinase-like domain. 11–18 (APSGAGKS) contacts ATP.

This sequence belongs to the guanylate kinase family.

The protein localises to the cytoplasm. The catalysed reaction is GMP + ATP = GDP + ADP. Functionally, essential for recycling GMP and indirectly, cGMP. In Escherichia coli O6:K15:H31 (strain 536 / UPEC), this protein is Guanylate kinase.